A 79-amino-acid polypeptide reads, in one-letter code: Hemoglobin subunit zeta (79 aa).

An N-acetylserine modification is found at S1. The 79-residue stretch at 1–79 (SLTKTXXTII…FKLLSHXFLV (79 aa)) folds into the Globin domain. Phosphoserine is present on residues S38 and S53. A heme b-binding site is contributed by H59.

Belongs to the globin family. Heterotetramer of two zeta chains and two epsilon chains.

The zeta chain is an alpha-type chain of mammalian embryonic hemoglobin. The chain is Hemoglobin subunit zeta from Notamacropus eugenii (Tammar wallaby).